The following is a 411-amino-acid chain: MSINLNRVQNLIEKLAFISSVPNELTRLAFTEEDEKAHNMIIELCKEYDLSIRRDSIGNLFIRKAGKEDFLPAVAFGSHIDTVVNAGKFDGPLGSVAGLEILLQLCEQNIQTRYPLELIIFTCEESSRFNFATLGSKVMCGIVNQEKLSSLRDKQGKGLSEAMAEVGMNFNLVNQAKRDAKEFKCFFELHIEQGPRLENEGKTIGVVTGIAAPIRAIVKIKGQADHSGATAMHYRHDALLGGSELSLAIERAAIQAGHSTVATVGNITAKPGVMNVVPGYCELLVDIRGTHVQARDSVFELLQEEISKVSEKRGLLIELQLISKDNPIILPENMVNQIAETAHSLGYSYEIMPSGAGHDAMHMATLCPTGMIFIPSHLGISHNPLEFTDWKDIEAGIKVLQKVILEQAEVC.

It belongs to the peptidase M20 family.

This is an uncharacterized protein from Haemophilus influenzae (strain ATCC 51907 / DSM 11121 / KW20 / Rd).